We begin with the raw amino-acid sequence, 235 residues long: ATP-dependent dethiobiotin synthetase BioD (235 aa).

Position 12–17 (12–17 (GVGKTF)) interacts with ATP. Position 16 (T16) interacts with Mg(2+). The active site involves K37. Residue S41 coordinates substrate. ATP is bound by residues D51, 112–115 (EGAG), and 202–204 (PKL). 2 residues coordinate Mg(2+): D51 and E112.

The protein belongs to the dethiobiotin synthetase family. As to quaternary structure, homodimer. The cofactor is Mg(2+).

It localises to the cytoplasm. It carries out the reaction (7R,8S)-7,8-diammoniononanoate + CO2 + ATP = (4R,5S)-dethiobiotin + ADP + phosphate + 3 H(+). It participates in cofactor biosynthesis; biotin biosynthesis; biotin from 7,8-diaminononanoate: step 1/2. Catalyzes a mechanistically unusual reaction, the ATP-dependent insertion of CO2 between the N7 and N8 nitrogen atoms of 7,8-diaminopelargonic acid (DAPA, also called 7,8-diammoniononanoate) to form a ureido ring. This is ATP-dependent dethiobiotin synthetase BioD from Bacillus licheniformis (strain ATCC 14580 / DSM 13 / JCM 2505 / CCUG 7422 / NBRC 12200 / NCIMB 9375 / NCTC 10341 / NRRL NRS-1264 / Gibson 46).